A 73-amino-acid chain; its full sequence is Large ribosomal subunit protein bL31 (73 aa).

Belongs to the bacterial ribosomal protein bL31 family. Type A subfamily. Part of the 50S ribosomal subunit.

In terms of biological role, binds the 23S rRNA. The chain is Large ribosomal subunit protein bL31 from Chelativorans sp. (strain BNC1).